The chain runs to 216 residues: tRNA (guanine-N(7)-)-methyltransferase (216 aa).

4 residues coordinate S-adenosyl-L-methionine: E44, E69, N97, and D119. D119 is a catalytic residue. Residues K123, D155, and 192–195 contribute to the substrate site; that span reads TEYE.

It belongs to the class I-like SAM-binding methyltransferase superfamily. TrmB family.

It catalyses the reaction guanosine(46) in tRNA + S-adenosyl-L-methionine = N(7)-methylguanosine(46) in tRNA + S-adenosyl-L-homocysteine. It participates in tRNA modification; N(7)-methylguanine-tRNA biosynthesis. Its function is as follows. Catalyzes the formation of N(7)-methylguanine at position 46 (m7G46) in tRNA. The sequence is that of tRNA (guanine-N(7)-)-methyltransferase from Lysinibacillus sphaericus (strain C3-41).